A 123-amino-acid chain; its full sequence is Transmembrane protein 254 (123 aa).

Alanine 2 is subject to N-acetylalanine. The next 3 helical transmembrane spans lie at 15-35, 61-81, and 95-115; these read LFWF…VFWP, LCNG…YAIV, and LLWF…LIAY.

It is found in the membrane. The protein is Transmembrane protein 254 (TMEM254) of Homo sapiens (Human).